Here is a 359-residue protein sequence, read N- to C-terminus: MMTQPNLNIVPFVSVDHMMKLVLRVGVETFLKELAGYVEEDFRRWQNFDKTPRVASHSKEGVIELMPTSDGTLYGFKYVNGHPKNTRDGLQTVTAFGVLADVGSGYPMLLTEMTILTALRTAATSAVAAKHLAPKNARTMAIIGNSAQSEFQALAFKAILGVDKLRLYDLDPQATAKCIRNLQGAGFNIVACKSVEEAVEGADIITTVTADKANATILTDNMVGAGVHINAVGGDCPGKTELHGDILRRSDIFVEYPPQTRIEGEIQQLPEDYPVNELWEVITGRIAGRKDARQITLFDSVGFATEDFSALRYVRDKLKDTGLYEQLDLLADPDEPRDLYGMLLRHEKLLQSESTKPAA.

L-ornithine-binding residues include Arg-53 and Lys-77. NAD(+) is bound by residues Thr-92, Arg-120, 147–148 (AQ), Asp-169, Thr-209, 232–235 (VGGD), Lys-239, and Ser-300. Arg-120 lines the L-ornithine pocket. Asp-235 contacts L-ornithine. Asp-235 functions as the Proton donor/acceptor in the catalytic mechanism. Residue Val-301 coordinates L-ornithine.

The protein belongs to the ornithine cyclodeaminase/mu-crystallin family. NAD(+) serves as cofactor.

It catalyses the reaction L-ornithine = L-proline + NH4(+). The protein operates within amino-acid biosynthesis; L-proline biosynthesis; L-proline from L-ornithine: step 1/1. Its function is as follows. Catalyzes the conversion of L-ornithine into L-proline with release of ammonia. This chain is Ornithine cyclodeaminase, found in Brucella melitensis biotype 1 (strain ATCC 23456 / CCUG 17765 / NCTC 10094 / 16M).